The sequence spans 59 residues: Large ribosomal subunit protein uL30 (59 aa).

The protein belongs to the universal ribosomal protein uL30 family. As to quaternary structure, part of the 50S ribosomal subunit.

In Listeria innocua serovar 6a (strain ATCC BAA-680 / CLIP 11262), this protein is Large ribosomal subunit protein uL30.